A 397-amino-acid polypeptide reads, in one-letter code: Elongation factor Tu (397 aa).

A tr-type G domain is found at 10–206 (KPHVNIGTIG…AVDTYIPTPE (197 aa)). A G1 region spans residues 19–26 (GHVDHGKT). Residue 19-26 (GHVDHGKT) coordinates GTP. T26 contributes to the Mg(2+) binding site. The interval 60 to 64 (GITIN) is G2. A G3 region spans residues 81–84 (DCPG). GTP-binding positions include 81-85 (DCPGH) and 136-139 (NKSD). A G4 region spans residues 136–139 (NKSD). Residues 174 to 176 (SAL) are G5.

Belongs to the TRAFAC class translation factor GTPase superfamily. Classic translation factor GTPase family. EF-Tu/EF-1A subfamily. In terms of assembly, monomer.

It is found in the cytoplasm. The enzyme catalyses GTP + H2O = GDP + phosphate + H(+). GTP hydrolase that promotes the GTP-dependent binding of aminoacyl-tRNA to the A-site of ribosomes during protein biosynthesis. The protein is Elongation factor Tu of Clostridium kluyveri (strain ATCC 8527 / DSM 555 / NBRC 12016 / NCIMB 10680 / K1).